Reading from the N-terminus, the 278-residue chain is Large ribosomal subunit protein uL2 (278 aa).

Disordered regions lie at residues 1–58 (MGIR…GGGH) and 210–278 (GRMR…GKKR). Basic and acidic residues predominate over residues 23 to 33 (EVTRSEPEKSL). Low complexity predominate over residues 40–49 (SGGRNSTGRI). Composition is skewed to basic residues over residues 210 to 220 (GRMRWKGKRPS) and 269 to 278 (VRRRRTGKKR).

The protein belongs to the universal ribosomal protein uL2 family. As to quaternary structure, part of the 50S ribosomal subunit. Forms a bridge to the 30S subunit in the 70S ribosome.

Its function is as follows. One of the primary rRNA binding proteins. Required for association of the 30S and 50S subunits to form the 70S ribosome, for tRNA binding and peptide bond formation. It has been suggested to have peptidyltransferase activity; this is somewhat controversial. Makes several contacts with the 16S rRNA in the 70S ribosome. This is Large ribosomal subunit protein uL2 from Beutenbergia cavernae (strain ATCC BAA-8 / DSM 12333 / CCUG 43141 / JCM 11478 / NBRC 16432 / NCIMB 13614 / HKI 0122).